Here is a 213-residue protein sequence, read N- to C-terminus: Urease accessory protein UreG (213 aa).

Residue 12-19 (GPVGSGKT) participates in GTP binding.

The protein belongs to the SIMIBI class G3E GTPase family. UreG subfamily. As to quaternary structure, homodimer. UreD, UreF and UreG form a complex that acts as a GTP-hydrolysis-dependent molecular chaperone, activating the urease apoprotein by helping to assemble the nickel containing metallocenter of UreC. The UreE protein probably delivers the nickel.

It is found in the cytoplasm. In terms of biological role, facilitates the functional incorporation of the urease nickel metallocenter. This process requires GTP hydrolysis, probably effectuated by UreG. The polypeptide is Urease accessory protein UreG (Marinomonas sp. (strain MWYL1)).